Consider the following 547-residue polypeptide: Leiomodin-2 (547 aa).

The segment at 1–47 (MSTFGYRRGLSKYESIDEDELLASLSAEELKELERELEDIEPDRNLP) is interaction with tropomyosin alpha. 3 interaction with actin regions span residues 1–161 (MSTF…SDNS), 162–497 (KPKI…KEIK), and 521–540 (AHENLMEAIRGSSIKQLKRV). A phosphoserine mark is found at Ser-11, Ser-15, and Ser-24. Residues 16 to 41 (IDEDELLASLSAEELKELERELEDIE) adopt a coiled-coil conformation. Disordered stretches follow at residues 91–162 (KVAE…DNSK) and 352–533 (MDKQ…RGSS). Acidic residues-rich tracts occupy residues 95-104 (DKEESEEELI) and 112-139 (VSEEVYTEEEEEESQEEEEEEDSDEEER). Positions 113-148 (SEEVYTEEEEEESQEEEEEEDSDEEERTIETAKGIN) form a coiled coil. Residues 149 to 160 (GTVNYDSVNSDN) are compositionally biased toward polar residues. Over residues 352-367 (MDKQRQKRLQEQKQQE) the composition is skewed to basic and acidic residues. Ser-400 bears the Phosphoserine mark. Residues 419–449 (ATPPPPPPPPPPPPPSSQRLPPPPPPPPPPL) are compositionally biased toward pro residues. A compositionally biased stretch (polar residues) spans 465-475 (QQESAQRALQN). Over residues 477–487 (QKKKKGKKVKK) the composition is skewed to basic residues. Residues 494–512 (KEIKNSLRSVQEKKMEDSS) show a composition bias toward basic and acidic residues. Residues 521-540 (AHENLMEAIRGSSIKQLKRV) enclose the WH2 domain.

It belongs to the tropomodulin family. Can bind at least three actin monomers and thereby provides a nucleus for actin filament formation. Interacts (via N-terminus) with tropomyosin alpha (TPM1) (via N-terminus). May also interact with TPM2 (via N-terminus). Interacts with FLII. In terms of tissue distribution, specifically expressed in heart and skeletal muscles, with higher levels in heart (at protein level). Not expressed in other tissues.

Its subcellular location is the cytoplasm. It is found in the myofibril. The protein resides in the sarcomere. The protein localises to the m line. It localises to the cytoskeleton. In terms of biological role, mediates nucleation of actin filaments and thereby promotes actin polymerization. Plays a role in the regulation of actin filament length. Required for normal sarcomere organization in the heart, and for normal heart function. This chain is Leiomodin-2 (LMOD2), found in Homo sapiens (Human).